The primary structure comprises 156 residues: Small ribosomal subunit protein uS7 (156 aa).

It belongs to the universal ribosomal protein uS7 family. In terms of assembly, part of the 30S ribosomal subunit. Contacts proteins S9 and S11.

In terms of biological role, one of the primary rRNA binding proteins, it binds directly to 16S rRNA where it nucleates assembly of the head domain of the 30S subunit. Is located at the subunit interface close to the decoding center, probably blocks exit of the E-site tRNA. The polypeptide is Small ribosomal subunit protein uS7 (Dehalococcoides mccartyi (strain ATCC BAA-2100 / JCM 16839 / KCTC 5957 / BAV1)).